The sequence spans 82 residues: MAKSVNATGFITYMVIFLILTGISRVKAKKPPCLEGRTAYVSPGPCSNSLCTQDCRPAGYHTGKCKVEWSTPICKCYGCRKV.

The N-terminal stretch at 1–28 (MAKSVNATGFITYMVIFLILTGISRVKA) is a signal peptide. 4 cysteine pairs are disulfide-bonded: C33–C79, C46–C65, C51–C74, and C55–C76.

This sequence belongs to the DEFL family.

The protein localises to the secreted. The protein is Putative defensin-like protein 191 of Arabidopsis thaliana (Mouse-ear cress).